Here is a 186-residue protein sequence, read N- to C-terminus: Ribosome-recycling factor (186 aa).

This sequence belongs to the RRF family.

It localises to the cytoplasm. Its function is as follows. Responsible for the release of ribosomes from messenger RNA at the termination of protein biosynthesis. May increase the efficiency of translation by recycling ribosomes from one round of translation to another. In Janthinobacterium sp. (strain Marseille) (Minibacterium massiliensis), this protein is Ribosome-recycling factor.